The chain runs to 439 residues: Serine--tRNA ligase (439 aa).

Residue 242–244 (TAE) coordinates L-serine. ATP is bound at residue 273-275 (RQE). Glu296 lines the L-serine pocket. An ATP-binding site is contributed by 360–363 (EISS). Ser396 lines the L-serine pocket.

Belongs to the class-II aminoacyl-tRNA synthetase family. Type-1 seryl-tRNA synthetase subfamily. As to quaternary structure, homodimer. The tRNA molecule binds across the dimer.

It is found in the cytoplasm. It catalyses the reaction tRNA(Ser) + L-serine + ATP = L-seryl-tRNA(Ser) + AMP + diphosphate + H(+). The enzyme catalyses tRNA(Sec) + L-serine + ATP = L-seryl-tRNA(Sec) + AMP + diphosphate + H(+). Its pathway is aminoacyl-tRNA biosynthesis; selenocysteinyl-tRNA(Sec) biosynthesis; L-seryl-tRNA(Sec) from L-serine and tRNA(Sec): step 1/1. Its function is as follows. Catalyzes the attachment of serine to tRNA(Ser). Is also able to aminoacylate tRNA(Sec) with serine, to form the misacylated tRNA L-seryl-tRNA(Sec), which will be further converted into selenocysteinyl-tRNA(Sec). This is Serine--tRNA ligase from Oenococcus oeni (strain ATCC BAA-331 / PSU-1).